Reading from the N-terminus, the 353-residue chain is Cellulose-complementing protein (353 aa).

3 disordered regions span residues 1 to 21 (MSASGSDEVAGGGQAGSPQDF), 75 to 94 (PQIAVAPPPPPVVPDPPAIV), and 117 to 337 (AVPA…SPRP). A compositionally biased stretch (pro residues) spans 80-91 (APPPPPVVPDPP). Composition is skewed to low complexity over residues 117 to 132 (AVPAEPPVQEAPVQAA) and 142 to 164 (IAEQAPPAAPDPASVPYANVAAA). Pro residues predominate over residues 165–175 (PVPPDPAPVTP). Composition is skewed to polar residues over residues 196-226 (QVRTVQEGATPSRVPSRSMNAFPRTSASSIS) and 278-304 (STRSVRSNVSRMTSMTKTDTNSSQASR).

The sequence is that of Cellulose-complementing protein (ccpAX) from Komagataeibacter xylinus (Gluconacetobacter xylinus).